The sequence spans 239 residues: 1-(5-phosphoribosyl)-5-[(5-phosphoribosylamino)methylideneamino] imidazole-4-carboxamide isomerase (239 aa).

D8 (proton acceptor) is an active-site residue. The active-site Proton donor is the D129.

This sequence belongs to the HisA/HisF family.

The protein resides in the cytoplasm. It catalyses the reaction 1-(5-phospho-beta-D-ribosyl)-5-[(5-phospho-beta-D-ribosylamino)methylideneamino]imidazole-4-carboxamide = 5-[(5-phospho-1-deoxy-D-ribulos-1-ylimino)methylamino]-1-(5-phospho-beta-D-ribosyl)imidazole-4-carboxamide. Its pathway is amino-acid biosynthesis; L-histidine biosynthesis; L-histidine from 5-phospho-alpha-D-ribose 1-diphosphate: step 4/9. This Bacillus thuringiensis (strain Al Hakam) protein is 1-(5-phosphoribosyl)-5-[(5-phosphoribosylamino)methylideneamino] imidazole-4-carboxamide isomerase.